The sequence spans 88 residues: Putative membrane protein insertion efficiency factor (88 aa).

This sequence belongs to the UPF0161 family.

The protein resides in the cell inner membrane. Functionally, could be involved in insertion of integral membrane proteins into the membrane. The polypeptide is Putative membrane protein insertion efficiency factor (Koribacter versatilis (strain Ellin345)).